A 268-amino-acid polypeptide reads, in one-letter code: Interleukin-1 beta (268 aa).

Positions 1 to 115 (MAAVPDTSDM…DNWDEGYVCD (115 aa)) are excised as a propeptide.

The protein belongs to the IL-1 family. As to quaternary structure, monomer. In its precursor form, weakly interacts with full-length MEFV; the mature cytokine does not interact at all. Interacts with integrins ITGAV:ITGBV and ITGA5:ITGB1; integrin-binding is required for IL1B signaling. Interacts with cargo receptor TMED10; the interaction is direct and is required for the secretion of IL1B mature form. Interacts with HSP90AB1; the interaction facilitates cargo translocation into the ERGIC. Interacts with HSP90B1; the interaction facilitates cargo translocation into the ERGIC.

It is found in the cytoplasm. The protein localises to the cytosol. It localises to the secreted. The protein resides in the lysosome. Its subcellular location is the extracellular exosome. In terms of biological role, potent pro-inflammatory cytokine. Initially discovered as the major endogenous pyrogen, induces prostaglandin synthesis, neutrophil influx and activation, T-cell activation and cytokine production, B-cell activation and antibody production, and fibroblast proliferation and collagen production. Promotes Th17 differentiation of T-cells. Synergizes with IL12/interleukin-12 to induce IFNG synthesis from T-helper 1 (Th1) cells. Plays a role in angiogenesis by inducing VEGF production synergistically with TNF and IL6. Involved in transduction of inflammation downstream of pyroptosis: its mature form is specifically released in the extracellular milieu by passing through the gasdermin-D (GSDMD) pore. The sequence is that of Interleukin-1 beta (IL1B) from Equus caballus (Horse).